The primary structure comprises 353 residues: Guanine nucleotide-binding protein G(q) subunit alpha (353 aa).

Residues cysteine 3 and cysteine 4 are each lipidated (S-palmitoyl cysteine). The region spanning 32 to 353 (RELKLLLLGT…QLNLKEYNLV (322 aa)) is the G-alpha domain. The tract at residues 35–48 (KLLLLGTGESGKST) is G1 motif. Residues 40 to 47 (GTGESGKS), 174 to 180 (LRVRVPT), 199 to 203 (DVGGQ), 268 to 271 (NKKD), and alanine 325 each bind GTP. Positions 47 and 180 each coordinate Mg(2+). Residues 172–180 (DILRVRVPT) are G2 motif. A G3 motif region spans residues 195-204 (FRMVDVGGQR). The G4 motif stretch occupies residues 264-271 (ILFLNKKD). Residues 323-328 (TCATDT) form a G5 motif region.

This sequence belongs to the G-alpha family. G(q) subfamily. As to quaternary structure, g proteins are composed of 3 units; alpha, beta and gamma. The alpha chain contains the guanine nucleotide binding site.

Its function is as follows. Guanine nucleotide-binding proteins (G proteins) are involved as modulators or transducers in various transmembrane signaling systems. The polypeptide is Guanine nucleotide-binding protein G(q) subunit alpha (Lymnaea stagnalis (Great pond snail)).